The primary structure comprises 366 residues: Phospho-N-acetylmuramoyl-pentapeptide-transferase (366 aa).

A run of 10 helical transmembrane segments spans residues 27-47, 76-96, 101-121, 136-156, 176-196, 205-225, 241-261, 264-284, 285-305, and 343-363; these read GAAITSLVLCWLLGRPMISLL, PTMGGLLILLAVSLSCLIWVI, FFWLSLLSMLFMGGIGFWDDF, IKLLAQAIVGVVVGIVLLADP, IDIGWMAIPFFILVVMGSSNA, GLAAGCTIGVAFVYAVFSYIS, GAGELTIFCSALIGACMGFLW, CYPAAVFMGDTGSLAIGSALG, VVAIILGQELLLVIAGGIFVI, and AVTVRFWILSLLFGLLALSSL.

The protein belongs to the glycosyltransferase 4 family. MraY subfamily. The cofactor is Mg(2+).

It localises to the cell inner membrane. It catalyses the reaction UDP-N-acetyl-alpha-D-muramoyl-L-alanyl-gamma-D-glutamyl-meso-2,6-diaminopimeloyl-D-alanyl-D-alanine + di-trans,octa-cis-undecaprenyl phosphate = di-trans,octa-cis-undecaprenyl diphospho-N-acetyl-alpha-D-muramoyl-L-alanyl-D-glutamyl-meso-2,6-diaminopimeloyl-D-alanyl-D-alanine + UMP. The protein operates within cell wall biogenesis; peptidoglycan biosynthesis. Catalyzes the initial step of the lipid cycle reactions in the biosynthesis of the cell wall peptidoglycan: transfers peptidoglycan precursor phospho-MurNAc-pentapeptide from UDP-MurNAc-pentapeptide onto the lipid carrier undecaprenyl phosphate, yielding undecaprenyl-pyrophosphoryl-MurNAc-pentapeptide, known as lipid I. This is Phospho-N-acetylmuramoyl-pentapeptide-transferase from Methylacidiphilum infernorum (isolate V4) (Methylokorus infernorum (strain V4)).